Consider the following 232-residue polypeptide: Uracil phosphoribosyltransferase (232 aa).

A GTP-binding site is contributed by 38–42; it reads KGLVK. 5-phospho-alpha-D-ribose 1-diphosphate contacts are provided by residues arginine 87, arginine 112, and 140-148; that span reads DPMIATGST. Uracil contacts are provided by residues isoleucine 204 and 209 to 211; that span reads GDA. Aspartate 210 is a 5-phospho-alpha-D-ribose 1-diphosphate binding site.

Belongs to the UPRTase family. Mg(2+) is required as a cofactor.

It carries out the reaction UMP + diphosphate = 5-phospho-alpha-D-ribose 1-diphosphate + uracil. The protein operates within pyrimidine metabolism; UMP biosynthesis via salvage pathway; UMP from uracil: step 1/1. With respect to regulation, allosterically activated by GTP. In terms of biological role, catalyzes the conversion of uracil and 5-phospho-alpha-D-ribose 1-diphosphate (PRPP) to UMP and diphosphate. The polypeptide is Uracil phosphoribosyltransferase (Thermococcus sibiricus (strain DSM 12597 / MM 739)).